A 370-amino-acid chain; its full sequence is Dual-specificity RNA methyltransferase RlmN (370 aa).

Catalysis depends on Glu93, which acts as the Proton acceptor. Residues 99–337 (EEGRGTLCVS…VTTVRKTRGD (239 aa)) enclose the Radical SAM core domain. A disulfide bond links Cys106 and Cys343. [4Fe-4S] cluster-binding residues include Cys113, Cys117, and Cys120. Residues 167–168 (GE), Ser199, 221–223 (SLH), and Asn300 contribute to the S-adenosyl-L-methionine site. The active-site S-methylcysteine intermediate is Cys343.

Belongs to the radical SAM superfamily. RlmN family. The cofactor is [4Fe-4S] cluster.

It is found in the cytoplasm. The catalysed reaction is adenosine(2503) in 23S rRNA + 2 reduced [2Fe-2S]-[ferredoxin] + 2 S-adenosyl-L-methionine = 2-methyladenosine(2503) in 23S rRNA + 5'-deoxyadenosine + L-methionine + 2 oxidized [2Fe-2S]-[ferredoxin] + S-adenosyl-L-homocysteine. It catalyses the reaction adenosine(37) in tRNA + 2 reduced [2Fe-2S]-[ferredoxin] + 2 S-adenosyl-L-methionine = 2-methyladenosine(37) in tRNA + 5'-deoxyadenosine + L-methionine + 2 oxidized [2Fe-2S]-[ferredoxin] + S-adenosyl-L-homocysteine. Specifically methylates position 2 of adenine 2503 in 23S rRNA and position 2 of adenine 37 in tRNAs. m2A2503 modification seems to play a crucial role in the proofreading step occurring at the peptidyl transferase center and thus would serve to optimize ribosomal fidelity. This is Dual-specificity RNA methyltransferase RlmN from Francisella tularensis subsp. holarctica (strain LVS).